The chain runs to 125 residues: uncharacterized protein (125 aa).

A helical transmembrane segment spans residues 7–29; it reads NCMFLYVYTDVCVRLCASIFYIM.

It is found in the membrane. This is an uncharacterized protein from Saccharomyces cerevisiae (strain ATCC 204508 / S288c) (Baker's yeast).